We begin with the raw amino-acid sequence, 370 residues long: Cobalt-precorrin-5B C(1)-methyltransferase (370 aa).

Belongs to the CbiD family.

It catalyses the reaction Co-precorrin-5B + S-adenosyl-L-methionine = Co-precorrin-6A + S-adenosyl-L-homocysteine. It functions in the pathway cofactor biosynthesis; adenosylcobalamin biosynthesis; cob(II)yrinate a,c-diamide from sirohydrochlorin (anaerobic route): step 6/10. Catalyzes the methylation of C-1 in cobalt-precorrin-5B to form cobalt-precorrin-6A. In Trichormus variabilis (strain ATCC 29413 / PCC 7937) (Anabaena variabilis), this protein is Cobalt-precorrin-5B C(1)-methyltransferase.